A 226-amino-acid chain; its full sequence is UPF0111 protein PH0637 (226 aa).

The protein belongs to the UPF0111 family.

The chain is UPF0111 protein PH0637 from Pyrococcus horikoshii (strain ATCC 700860 / DSM 12428 / JCM 9974 / NBRC 100139 / OT-3).